The primary structure comprises 347 residues: Eukaryotic translation initiation factor 3 subunit I (347 aa).

6 WD repeats span residues 8-49 (GHER…GTYE), 50-89 (GHNG…CLFT), 146-186 (TFSG…PESG), 198-237 (AHTD…VIKT), 239-278 (ATET…GRFE), and 295-336 (GHFG…SKLY).

This sequence belongs to the eIF-3 subunit I family. In terms of assembly, component of the eukaryotic translation initiation factor 3 (eIF-3) complex.

Its subcellular location is the cytoplasm. Component of the eukaryotic translation initiation factor 3 (eIF-3) complex, which is involved in protein synthesis of a specialized repertoire of mRNAs and, together with other initiation factors, stimulates binding of mRNA and methionyl-tRNAi to the 40S ribosome. The eIF-3 complex specifically targets and initiates translation of a subset of mRNAs involved in cell proliferation. The sequence is that of Eukaryotic translation initiation factor 3 subunit I from Mycosarcoma maydis (Corn smut fungus).